The sequence spans 248 residues: tRNA (guanine-N(1)-)-methyltransferase (248 aa).

S-adenosyl-L-methionine is bound by residues glycine 126 and 150–155; that span reads LGDYVL. The interval 224–248 is disordered; that stretch reads WRRTQQEERTRERRPDLWAAFDSED. Basic and acidic residues predominate over residues 227 to 239; it reads TQQEERTRERRPD.

Belongs to the RNA methyltransferase TrmD family. Homodimer.

The protein resides in the cytoplasm. It catalyses the reaction guanosine(37) in tRNA + S-adenosyl-L-methionine = N(1)-methylguanosine(37) in tRNA + S-adenosyl-L-homocysteine + H(+). In terms of biological role, specifically methylates guanosine-37 in various tRNAs. In Micrococcus luteus (strain ATCC 4698 / DSM 20030 / JCM 1464 / CCM 169 / CCUG 5858 / IAM 1056 / NBRC 3333 / NCIMB 9278 / NCTC 2665 / VKM Ac-2230) (Micrococcus lysodeikticus), this protein is tRNA (guanine-N(1)-)-methyltransferase.